The primary structure comprises 357 residues: Uroporphyrinogen decarboxylase (357 aa).

Residues 30–34 (RQAGR), Asp-79, Tyr-154, Ser-209, and His-336 each bind substrate.

The protein belongs to the uroporphyrinogen decarboxylase family. In terms of assembly, homodimer.

The protein resides in the cytoplasm. It carries out the reaction uroporphyrinogen III + 4 H(+) = coproporphyrinogen III + 4 CO2. It participates in porphyrin-containing compound metabolism; protoporphyrin-IX biosynthesis; coproporphyrinogen-III from 5-aminolevulinate: step 4/4. Functionally, catalyzes the decarboxylation of four acetate groups of uroporphyrinogen-III to yield coproporphyrinogen-III. This Mycobacterium bovis (strain ATCC BAA-935 / AF2122/97) protein is Uroporphyrinogen decarboxylase.